Consider the following 196-residue polypeptide: Probable malonic semialdehyde reductase RutE (196 aa).

Belongs to the nitroreductase family. HadB/RutE subfamily. FMN serves as cofactor.

It catalyses the reaction 3-hydroxypropanoate + NADP(+) = 3-oxopropanoate + NADPH + H(+). Functionally, may reduce toxic product malonic semialdehyde to 3-hydroxypropionic acid, which is excreted. In Shigella flexneri serotype 5b (strain 8401), this protein is Probable malonic semialdehyde reductase RutE.